The primary structure comprises 284 residues: tRNA-cytidine(32) 2-sulfurtransferase (284 aa).

Polar residues predominate over residues 1–11 (MTFHQPVSETA). Residues 1-20 (MTFHQPVSETAQPDEASGHP) are disordered. Positions 63–68 (SGGKDS) match the PP-loop motif motif. C138, C141, and C229 together coordinate [4Fe-4S] cluster.

This sequence belongs to the TtcA family. In terms of assembly, homodimer. Mg(2+) serves as cofactor. The cofactor is [4Fe-4S] cluster.

The protein localises to the cytoplasm. It carries out the reaction cytidine(32) in tRNA + S-sulfanyl-L-cysteinyl-[cysteine desulfurase] + AH2 + ATP = 2-thiocytidine(32) in tRNA + L-cysteinyl-[cysteine desulfurase] + A + AMP + diphosphate + H(+). It participates in tRNA modification. Functionally, catalyzes the ATP-dependent 2-thiolation of cytidine in position 32 of tRNA, to form 2-thiocytidine (s(2)C32). The sulfur atoms are provided by the cysteine/cysteine desulfurase (IscS) system. The polypeptide is tRNA-cytidine(32) 2-sulfurtransferase (Chelativorans sp. (strain BNC1)).